A 187-amino-acid chain; its full sequence is Ribosome-recycling factor (187 aa).

Belongs to the RRF family.

It is found in the cytoplasm. Its function is as follows. Responsible for the release of ribosomes from messenger RNA at the termination of protein biosynthesis. May increase the efficiency of translation by recycling ribosomes from one round of translation to another. The sequence is that of Ribosome-recycling factor from Flavobacterium johnsoniae (strain ATCC 17061 / DSM 2064 / JCM 8514 / BCRC 14874 / CCUG 350202 / NBRC 14942 / NCIMB 11054 / UW101) (Cytophaga johnsonae).